The primary structure comprises 313 residues: NAD-capped RNA hydrolase NudC (313 aa).

Residue Arg-111 coordinates substrate. The 126-residue stretch at 168–293 (PRIDPAVICL…DWSSASESKL (126 aa)) folds into the Nudix hydrolase domain. 3 residues coordinate a divalent metal cation: Ala-202, Glu-218, and Glu-222. The Nudix box motif lies at 203-224 (GFVEAGESFEVCVAREIREEIG). 236–243 (QPWPFPRS) serves as a coordination point for substrate. Glu-264 serves as a coordination point for a divalent metal cation.

It belongs to the Nudix hydrolase family. NudC subfamily. As to quaternary structure, homodimer. It depends on Mg(2+) as a cofactor. Requires Mn(2+) as cofactor.

The catalysed reaction is a 5'-end NAD(+)-phospho-ribonucleoside in mRNA + H2O = a 5'-end phospho-adenosine-phospho-ribonucleoside in mRNA + beta-nicotinamide D-ribonucleotide + 2 H(+). It catalyses the reaction NAD(+) + H2O = beta-nicotinamide D-ribonucleotide + AMP + 2 H(+). It carries out the reaction NADH + H2O = reduced beta-nicotinamide D-ribonucleotide + AMP + 2 H(+). Functionally, mRNA decapping enzyme that specifically removes the nicotinamide adenine dinucleotide (NAD) cap from a subset of mRNAs by hydrolyzing the diphosphate linkage to produce nicotinamide mononucleotide (NMN) and 5' monophosphate mRNA. The NAD-cap is present at the 5'-end of some mRNAs and stabilizes RNA against 5'-processing. Has preference for mRNAs with a 5'-end purine. Catalyzes the hydrolysis of a broad range of dinucleotide pyrophosphates. The sequence is that of NAD-capped RNA hydrolase NudC from Mycobacterium bovis (strain ATCC BAA-935 / AF2122/97).